A 321-amino-acid polypeptide reads, in one-letter code: Thylakoid-associated protein sll1697 (321 aa).

It is found in the cellular thylakoid membrane. The protein is Thylakoid-associated protein sll1697 of Synechocystis sp. (strain ATCC 27184 / PCC 6803 / Kazusa).